A 190-amino-acid chain; its full sequence is Riboflavin transporter FmnP (190 aa).

Residues 1-5 (MKVKK) lie on the Extracellular side of the membrane. Residues 6 to 26 (LVVVSMLSSIAFVLMLLNFPF) traverse the membrane as a helical segment. Residues 27-39 (PGLPDYLKIDFSD) are Cytoplasmic-facing. Residues 40–60 (VPAIIAILIYGPLAGIAVEAI) traverse the membrane as a helical segment. Topologically, residues 61–76 (KNVLQYIIQGSMAGVP) are extracellular. The helical transmembrane segment at 77 to 97 (VGQVANFIAGTLFILPTAFLF) threads the bilayer. Topologically, residues 98–109 (KKLNSAKGLAVS) are cytoplasmic. A helical membrane pass occupies residues 110 to 130 (LLLGTAAMTILMSILNYVLIL). At 131-154 (PAYTWFLHSPALSDSALKTAVVAG) the chain is on the extracellular side. The chain crosses the membrane as a helical span at residues 155–175 (ILPFNMIKGIVITVVFSLIFI). The Cytoplasmic portion of the chain corresponds to 176–190 (KLKPWIEQQRSAHIH).

This sequence belongs to the prokaryotic riboflavin transporter (P-RFT) (TC 2.A.87) family. Forms a stable energy-coupling factor (ECF) transporter complex composed of a membrane-embedded substrate-binding protein (S component), 2 ATP-binding proteins (A component) and 2 transmembrane proteins (T component). May be able to interact with more than 1 S component at a time.

The protein localises to the cell membrane. With respect to regulation, inhibited by excess of riboflavin or FMN. Also inhibited by protonophores such as CCCP and FCCP or in the absence of glucose. Functionally, mediates uptake of riboflavin and roseoflavin, a toxic riboflavin analog; may also transport FMN. Probably a riboflavin-binding protein that interacts with the energy-coupling factor (ECF) ABC-transporter complex. Unlike classic ABC transporters this ECF transporter provides the energy necessary to transport a number of different substrates. The substrates themselves are bound by transmembrane, not extracytoplasmic soluble proteins. The chain is Riboflavin transporter FmnP (fmnP) from Bacillus subtilis (strain 168).